A 565-amino-acid chain; its full sequence is Amino-acid acetyltransferase, mitochondrial (565 aa).

The segment at 38–58 (DIATATPAATPSDGAQPPAQN) is disordered. The 189-residue stretch at 352-540 (LPVRVLRSME…EFGGGRLVRV (189 aa)) folds into the N-acetyltransferase domain.

This sequence belongs to the acetyltransferase family.

The protein localises to the mitochondrion. It carries out the reaction L-glutamate + acetyl-CoA = N-acetyl-L-glutamate + CoA + H(+). It functions in the pathway amino-acid biosynthesis; L-arginine biosynthesis; N(2)-acetyl-L-ornithine from L-glutamate: step 1/4. Functionally, N-acetylglutamate synthase involved in arginine biosynthesis. The sequence is that of Amino-acid acetyltransferase, mitochondrial (ARG2) from Cryptococcus neoformans var. neoformans serotype D (strain B-3501A) (Filobasidiella neoformans).